Consider the following 805-residue polypeptide: Angiotensin-converting enzyme 2 (805 aa).

Residues Met1 to Ala17 form the signal peptide. Residues Gln18–Thr740 are Extracellular-facing. Positions Ser19–Ser607 constitute a Peptidase M2 domain. N-linked (GlcNAc...) asparagine glycosylation is found at Asn53, Asn82, and Asn90. Cys133 and Cys141 form a disulfide bridge. Residue Arg169 participates in chloride binding. Residue Arg273 participates in substrate binding. N-linked (GlcNAc...) asparagine glycosylation is present at Asn299. A disulfide bridge connects residues Cys344 and Cys361. Residue His345 to Pro346 participates in substrate binding. Residue His374 coordinates Zn(2+). The Proton acceptor role is filled by Glu375. Residues His378 and Glu402 each coordinate Zn(2+). The N-linked (GlcNAc...) asparagine glycan is linked to Asn432. Chloride-binding residues include Trp477 and Lys481. His505 (proton donor) is an active-site residue. Tyr515 provides a ligand contact to substrate. An intrachain disulfide couples Cys530 to Cys542. Residues Asn546 and Asn601 are each glycosylated (N-linked (GlcNAc...) asparagine). One can recognise a Collectrin-like domain in the interval Ala614–Phe805. An essential for cleavage by ADAM17 region spans residues Arg652–Lys659. Residues Asn660 and Asn690 are each glycosylated (N-linked (GlcNAc...) asparagine). The tract at residues Arg697–Gly716 is essential for cleavage by TMPRSS11D and TMPRSS2. The chain crosses the membrane as a helical span at residues Ile741–Ile761. Residues Val762 to Phe805 are Cytoplasmic-facing. Positions Lys771–Phe805 are disordered. Residues Glu778–Ile786 carry the LIR motif. Position 781 is a phosphotyrosine (Tyr781). An Endocytic sorting signal motif is present at residues Tyr781–Met784. Residues Tyr781–Asp785 carry the SH2-binding motif. Phosphoserine is present on Ser783. Lys788 participates in a covalent cross-link: Glycyl lysine isopeptide (Lys-Gly) (interchain with G-Cter in ubiquitin). The PTB signature appears at Asn792–Phe795. Positions Ala793–Phe805 are enriched in polar residues. The short motif at Thr803–Phe805 is the PDZ-binding element.

The protein belongs to the peptidase M2 family. As to quaternary structure, homodimer. Interacts with the catalytically active form of TMPRSS2. Interacts with SLC6A19; this interaction is essential for expression and function of SLC6A19 in intestine. Interacts with ITGA5:ITGB1. Probably interacts (via endocytic sorting signal motif) with AP2M1; the interaction is inhibited by phosphorylation of Tyr-781. Interacts (via PDZ-binding motif) with NHERF1 (via PDZ domains); the interaction may enhance ACE2 membrane residence. Zn(2+) serves as cofactor. The cofactor is chloride. Post-translationally, glycosylated. Proteolytic cleavage by ADAM17 generates a secreted form. Also cleaved by serine proteases: TMPRSS2, TMPRSS11D and HPN/TMPRSS1. In terms of processing, phosphorylated. Phosphorylation at Tyr-781 probably inhibits interaction with AP2M1 and enables interactions with proteins containing SH2 domains. Post-translationally, ubiquitinated. Ubiquitinated on Lys-788 via 'Lys-48'-linked ubiquitin. 'Lys-48'-linked deubiquitinated by USP50 on the Lys-788; leading to its stabilization. Expressed in heart, kidney and forebrain. In testis, expression is restricted to Leydig cells. In heart, expressed in endothelial cells from small and large arteries, arterial smooth muscle cells, and myocytes (at protein level). Ubiquitously expressed, with highest levels in ileum, bladder and lung.

The protein resides in the secreted. Its subcellular location is the cell membrane. It is found in the cytoplasm. The protein localises to the cell projection. It localises to the cilium. The protein resides in the apical cell membrane. The enzyme catalyses angiotensin II + H2O = angiotensin-(1-7) + L-phenylalanine. It carries out the reaction angiotensin I + H2O = angiotensin-(1-9) + L-leucine. It catalyses the reaction bradykinin(1-8) + H2O = bradykinin(1-7) + L-phenylalanine. The catalysed reaction is neurotensin + H2O = neurotensin-(1-12) + L-leucine. The enzyme catalyses kinetensin + H2O = kinetensin-(1-8) + L-leucine. It carries out the reaction dynorphin A-(1-13) + H2O = dynorphin A-(1-12) + L-lysine. It catalyses the reaction apelin-13 + H2O = apelin-12 + L-phenylalanine. The catalysed reaction is [Pyr1]apelin-13 + H2O = [Pyr1]apelin-12 + L-phenylalanine. The enzyme catalyses apelin-17 + H2O = apelin-16 + L-phenylalanine. Activated by chloride and fluoride, but not bromide. Inhibited by MLN-4760, cFP_Leu, and EDTA, but not by the ACE inhibitors linosipril, captopril, enalaprilat. Its function is as follows. Essential counter-regulatory carboxypeptidase of the renin-angiotensin hormone system that is a critical regulator of blood volume, systemic vascular resistance, and thus cardiovascular homeostasis. Converts angiotensin I to angiotensin 1-9, a nine-amino acid peptide with anti-hypertrophic effects in cardiomyocytes, and angiotensin II to angiotensin 1-7, which then acts as a beneficial vasodilator and anti-proliferation agent, counterbalancing the actions of the vasoconstrictor angiotensin II. Also removes the C-terminal residue from three other vasoactive peptides, neurotensin, kinetensin, and des-Arg bradykinin, but is not active on bradykinin. Also cleaves other biological peptides, such as apelins, casomorphins and dynorphin A. Plays an important role in amino acid transport by acting as binding partner of amino acid transporter SLC6A19 in intestine, regulating trafficking, expression on the cell surface, and its catalytic activity. This chain is Angiotensin-converting enzyme 2 (Ace2), found in Rattus norvegicus (Rat).